Here is a 211-residue protein sequence, read N- to C-terminus: Protein CHLORORESPIRATORY REDUCTION 41, chloroplastic (211 aa).

The transit peptide at 1-38 (MASTSTLLLPSLSSKNLHIAVPIRTNSFVRRTTKFSTK) directs the protein to the chloroplast. Positions 136–163 (AKAGEIVAERAREEAEVLRDEGKVEERM) form a coiled coil.

As to quaternary structure, biogenesis factor component of the plastidial NDH subcomplex A.

Its subcellular location is the plastid. The protein resides in the chloroplast. It is found in the chloroplast stroma. Its function is as follows. Required for both formation and activity of the chloroplast NAD(P)H dehydrogenase (NDH) complex of the photosynthetic electron transport chain. Functions in assembly or stabilization of the NDH complex; probably involved, together with NdhO and NdhH, in the formation of an NDH subcomplex A assembly intermediate (NAI500). In Arabidopsis thaliana (Mouse-ear cress), this protein is Protein CHLORORESPIRATORY REDUCTION 41, chloroplastic.